Consider the following 122-residue polypeptide: MAPKKAPAATTEKKVKKAPTTEKKNKKKRSETFAIYIFKVLKQVHPDVGISKKAMNIMNSFINDSFERIALESSKLVRFNKRRTLSSREVQTAVKLLLPGELARHAISEGTKAVTKFSSSSN.

Low complexity predominate over residues 1 to 10 (MAPKKAPAAT). Residues 1-28 (MAPKKAPAATTEKKVKKAPTTEKKNKKK) form a disordered region. Ala2 carries the n,N,N-trimethylalanine modification. N6-acetyllysine occurs at positions 5 and 42. Lys116 participates in a covalent cross-link: Glycyl lysine isopeptide (Lys-Gly) (interchain with G-Cter in ubiquitin).

It belongs to the histone H2B family. As to quaternary structure, the nucleosome is a histone octamer containing two molecules each of H2A, H2B, H3 and H4 assembled in one H3-H4 heterotetramer and two H2A-H2B heterodimers. The octamer wraps approximately 147 bp of DNA. Post-translationally, acetylation occurs almost exclusively in the MAC. In terms of processing, monoubiquitination to form H2BK115ub1 gives a specific tag for epigenetic transcriptional activation and is also prerequisite for H3K4me and H3K79me formation.

Its subcellular location is the nucleus. It localises to the chromosome. Functionally, core component of nucleosome. Nucleosomes wrap and compact DNA into chromatin, limiting DNA accessibility to the cellular machineries which require DNA as a template. Histones thereby play a central role in transcription regulation, DNA repair, DNA replication and chromosomal stability. DNA accessibility is regulated via a complex set of post-translational modifications of histones, also called histone code, and nucleosome remodeling. In Tetrahymena thermophila (strain SB210), this protein is Histone H2B.2 (HTB2).